The primary structure comprises 312 residues: Testis-expressed protein 13B (312 aa).

This sequence belongs to the TEX13 family. As to expression, testis specific.

This is Testis-expressed protein 13B (TEX13B) from Homo sapiens (Human).